A 322-amino-acid polypeptide reads, in one-letter code: Ferrochelatase (322 aa).

Fe cation contacts are provided by His194 and Glu275.

The protein belongs to the ferrochelatase family.

It localises to the cytoplasm. It carries out the reaction heme b + 2 H(+) = protoporphyrin IX + Fe(2+). The protein operates within porphyrin-containing compound metabolism; protoheme biosynthesis; protoheme from protoporphyrin-IX: step 1/1. In terms of biological role, catalyzes the ferrous insertion into protoporphyrin IX. This chain is Ferrochelatase, found in Proteus mirabilis (strain HI4320).